We begin with the raw amino-acid sequence, 455 residues long: Single-stranded DNA-binding protein homolog sam-10 (455 aa).

The LisH domain maps to 19–51 (ARDRLTSYIYEYLQQTGASKTAETFKEEVLSTN). Disordered regions lie at residues 217 to 249 (PPPGGGAQPFPGASGSGGMMPNGAHPHMSLNSP), 281 to 302 (SDHQPMSAGPAAAAPGATTAGG), 314 to 343 (GPGSVPQVATTSVGSVGTPSSIGQQLHQPK), and 357 to 442 (EALT…NGEI). Composition is skewed to low complexity over residues 288 to 298 (AGPAAAAPGAT) and 321 to 336 (VATTSVGSVGTPSSIG). Polar residues predominate over residues 396-406 (HSVNNNVNPGT). The span at 407–421 (PGSNPLSNPMSNPPL) shows a compositional bias: low complexity.

Ubiquitously expressed with higher expression in the head and tail ganglia, the vulva and PLM neurons.

It localises to the cytoplasm. The protein resides in the nucleus. Functionally, involved cell autonomously in PLM neuron pre-synaptic differentiation by negatively regulating prk-2 expression and in neurite branch positioning. The sequence is that of Single-stranded DNA-binding protein homolog sam-10 from Caenorhabditis elegans.